A 492-amino-acid chain; its full sequence is Ketol-acid reductoisomerase (NADP(+)) (492 aa).

The region spanning 15 to 208 (AQLGKCRFMA…GGHRAGVLES (194 aa)) is the KARI N-terminal Rossmann domain. Residues 45 to 48 (CGAQ), arginine 68, arginine 76, serine 78, and 108 to 110 (DKQ) each bind NADP(+). Histidine 132 is an active-site residue. NADP(+) is bound at residue glycine 158. KARI C-terminal knotted domains follow at residues 209 to 344 (SFVA…NAPQ) and 345 to 485 (FEGK…MTDM). Residues aspartate 217, glutamate 221, glutamate 389, and glutamate 393 each coordinate Mg(2+). Serine 414 serves as a coordination point for substrate.

The protein belongs to the ketol-acid reductoisomerase family. Mg(2+) is required as a cofactor.

It catalyses the reaction (2R)-2,3-dihydroxy-3-methylbutanoate + NADP(+) = (2S)-2-acetolactate + NADPH + H(+). The catalysed reaction is (2R,3R)-2,3-dihydroxy-3-methylpentanoate + NADP(+) = (S)-2-ethyl-2-hydroxy-3-oxobutanoate + NADPH + H(+). Its pathway is amino-acid biosynthesis; L-isoleucine biosynthesis; L-isoleucine from 2-oxobutanoate: step 2/4. It functions in the pathway amino-acid biosynthesis; L-valine biosynthesis; L-valine from pyruvate: step 2/4. In terms of biological role, involved in the biosynthesis of branched-chain amino acids (BCAA). Catalyzes an alkyl-migration followed by a ketol-acid reduction of (S)-2-acetolactate (S2AL) to yield (R)-2,3-dihydroxy-isovalerate. In the isomerase reaction, S2AL is rearranged via a Mg-dependent methyl migration to produce 3-hydroxy-3-methyl-2-ketobutyrate (HMKB). In the reductase reaction, this 2-ketoacid undergoes a metal-dependent reduction by NADPH to yield (R)-2,3-dihydroxy-isovalerate. This is Ketol-acid reductoisomerase (NADP(+)) from Yersinia pseudotuberculosis serotype O:3 (strain YPIII).